A 1040-amino-acid chain; its full sequence is Multidrug resistance protein MdtB (1040 aa).

12 consecutive transmembrane segments (helical) span residues 25–45 (LLMV…PVAA), 342–362 (DTQF…YLFL), 369–389 (IIPG…MVFL), 396–416 (LTLM…IVVI), 440–460 (IGFT…PLLF), 472–492 (FAVT…TLTP), 537–557 (WLTL…WVFI), 863–883 (LGST…VLGV), 888–908 (FIHP…ALLA), 911–931 (IAGS…IGIV), 967–987 (PILM…LSTG), and 998–1018 (IGMV…TPVI).

This sequence belongs to the resistance-nodulation-cell division (RND) (TC 2.A.6) family. MdtB subfamily. Part of a tripartite efflux system composed of MdtA, MdtB and MdtC. MdtB forms a heteromultimer with MdtC.

Its subcellular location is the cell inner membrane. The polypeptide is Multidrug resistance protein MdtB (Citrobacter koseri (strain ATCC BAA-895 / CDC 4225-83 / SGSC4696)).